A 184-amino-acid polypeptide reads, in one-letter code: Large ribosomal subunit protein uL6 (184 aa).

The protein belongs to the universal ribosomal protein uL6 family. As to quaternary structure, part of the 50S ribosomal subunit.

In terms of biological role, this protein binds to the 23S rRNA, and is important in its secondary structure. It is located near the subunit interface in the base of the L7/L12 stalk, and near the tRNA binding site of the peptidyltransferase center. The protein is Large ribosomal subunit protein uL6 of Salinibacter ruber (strain DSM 13855 / M31).